The primary structure comprises 268 residues: Proliferating cell nuclear antigen (268 aa).

A DNA-binding region spans residues 61 to 80 (RCDRNPSMGMNLNNMAKMLK).

Belongs to the PCNA family.

The protein resides in the nucleus. This protein is an auxiliary protein of DNA polymerase delta and is involved in the control of eukaryotic DNA replication by increasing the polymerase's processibility during elongation of the leading strand. The chain is Proliferating cell nuclear antigen from Catharanthus roseus (Madagascar periwinkle).